A 458-amino-acid chain; its full sequence is Argininosuccinate lyase (458 aa).

It belongs to the lyase 1 family. Argininosuccinate lyase subfamily.

It is found in the cytoplasm. The catalysed reaction is 2-(N(omega)-L-arginino)succinate = fumarate + L-arginine. The protein operates within amino-acid biosynthesis; L-arginine biosynthesis; L-arginine from L-ornithine and carbamoyl phosphate: step 3/3. In Salmonella heidelberg (strain SL476), this protein is Argininosuccinate lyase.